Here is a 309-residue protein sequence, read N- to C-terminus: Serine/threonine-protein phosphatase CPPED1 (309 aa).

Positions 47-250 (WRIGDCDSGG…FSGHYHRNAG (204 aa)) are catalytic. The a divalent metal cation site is built by Asp51, Asp88, Asn125, and His244.

This sequence belongs to the metallophosphoesterase superfamily. CPPED1 family. Requires a divalent metal cation as cofactor.

It localises to the cytoplasm. The enzyme catalyses O-phospho-L-seryl-[protein] + H2O = L-seryl-[protein] + phosphate. It carries out the reaction O-phospho-L-threonyl-[protein] + H2O = L-threonyl-[protein] + phosphate. Its function is as follows. Protein phosphatase involved in the dephosphorylation of AKT kinase family. This Danio rerio (Zebrafish) protein is Serine/threonine-protein phosphatase CPPED1 (cpped1).